Reading from the N-terminus, the 361-residue chain is MHCSCLAEGIPANPGNWISGLAFPDWAYKAESSPGSRQIQLWHFILELLQKEEFRHVIAWQQGEYGEFVIKDPDEVARLWGRRKCKPQMNYDKLSRALRYYYNKRILHKTKGKRFTYKFNFSKLIVVNYPLWEVRAPPSPHLLLGAPALCRPALVPVGVQSELLHSMLFAHQAMVEQLTGQQTPRGPPETSGDKKGSSSSVYRLGSAPGPCRLGLCCHLGSVQGELPGVASFTPPLPPPLPSNWTCLSGPFLPPLPSEQQLPGAFKPDILLPGPRSLPGAWHFPGLPLLAGLGQGAGERLWLLSLRPEGLEVKPAPMMEAKGGLDPREVFCPETRRLKTGEESLTSPNLENLKAVWPLDPP.

The ETS DNA-binding region spans 39 to 120 (IQLWHFILEL…KGKRFTYKFN (82 aa)). Residues 178–201 (LTGQQTPRGPPETSGDKKGSSSSV) are disordered.

It belongs to the ETS family.

The protein localises to the nucleus. Its function is as follows. Transcriptional regulator. This is ETS translocation variant 3-like protein (ETV3L) from Homo sapiens (Human).